A 289-amino-acid chain; its full sequence is ATP synthase mitochondrial F1 complex assembly factor 2 (289 aa).

Residues 1 to 40 (MWRIYPRLRDRWRGLLDRRLSDPTVSVWPGPAPQPPARAY) constitute a mitochondrion transit peptide. An N6-succinyllysine modification is found at Lys133.

The protein belongs to the ATP12 family. As to quaternary structure, interacts with ATP5F1B; involved in the assembly of the F1 component of the mitochondrial ATP synthase (ATPase). Interacts with FMC1.

Its subcellular location is the mitochondrion inner membrane. Functionally, plays a role in the assembly of the F1 component of the mitochondrial ATP synthase (ATPase). The polypeptide is ATP synthase mitochondrial F1 complex assembly factor 2 (Mus musculus (Mouse)).